Here is a 337-residue protein sequence, read N- to C-terminus: GTPase Obg (337 aa).

Residues 1-159 (MKFVDSASIF…LMLNMELKLM (159 aa)) form the Obg domain. An OBG-type G domain is found at 160-323 (ADVGLVGFPN…LKDELWREVS (164 aa)). GTP is bound by residues 166–173 (GFPNAGKS), 191–195 (FTTLV), 213–216 (DIPG), 280–283 (TKMD), and 304–306 (SAV). Residues Ser173 and Thr193 each contribute to the Mg(2+) site.

This sequence belongs to the TRAFAC class OBG-HflX-like GTPase superfamily. OBG GTPase family. In terms of assembly, monomer. Mg(2+) serves as cofactor.

The protein localises to the cytoplasm. Its function is as follows. An essential GTPase which binds GTP, GDP and possibly (p)ppGpp with moderate affinity, with high nucleotide exchange rates and a fairly low GTP hydrolysis rate. Plays a role in control of the cell cycle, stress response, ribosome biogenesis and in those bacteria that undergo differentiation, in morphogenesis control. The chain is GTPase Obg from Pelodictyon phaeoclathratiforme (strain DSM 5477 / BU-1).